Consider the following 132-residue polypeptide: MRHRVAHRKFSRTSAHRMAMLLNMCISLIKHERISTTLPKAKELRPYVEKLITIGKVYHGKNLVYGKRLLISKIKNPDAANKLIDVLSIRYKSRNGGYTRIIKNGFRKGDSAPMAIIELVDRQIATVENNGS.

Belongs to the bacterial ribosomal protein bL17 family. Part of the 50S ribosomal subunit. Contacts protein L32.

In Ehrlichia canis (strain Jake), this protein is Large ribosomal subunit protein bL17.